Consider the following 726-residue polypeptide: Transcription factor 12 (726 aa).

9 disordered regions span residues 27–75 (SPPV…SRGF), 89–223 (LVSH…TFFD), 243–267 (YGGMLGGSSSHMPQSGNYSNLHSHD), 289–309 (SSFHRSSASTSPFVTASHTPP), 345–367 (PDHTSSSFPSNPSTPVGSPSPLA), 380–409 (TASGPAGRAGTTQWTRATGQAPSSPSYENS), 501–532 (MGSVHREESGSLNNNNHSALQASAAPTSSSEL), 558–624 (VENQ…ERRM), and 694–726 (EEEKVSGVSGDPQQAHPAVHPGLTDTSNPMGHL). Polar residues predominate over residues 29-47 (PVNSGKNRPTTLGSSQFTA). Residues 55-74 (SQASWASGGQSSPSFESSRG) are compositionally biased toward low complexity. Polar residues-rich tracts occupy residues 145-157 (PGKSPTPFYSYTG), 249-263 (GSSSHMPQSGNYSNL), and 291-309 (FHRSSASTSPFVTASHTPP). The span at 348–359 (TSSSFPSNPSTP) shows a compositional bias: low complexity. Composition is skewed to polar residues over residues 389-409 (GTTQWTRATGQAPSSPSYENS) and 510-532 (GSLNNNNHSALQASAAPTSSSEL). The segment covering 559–575 (ENQDKDDMHDSHASDDL) has biased composition (basic and acidic residues). The span at 592-603 (SSRPSCELSCSS) shows a compositional bias: low complexity. Over residues 612–624 (PEQKAERERERRM) the composition is skewed to basic and acidic residues. Residues 621–674 (ERRMANNARERLRVRDINEAFKELGRMCQLHLKSEKPQTKLLILHQAVAVILSL) form the bHLH domain. The tract at residues 676–699 (QQVRERNLNPKAACLKRREEEKVS) is class A specific domain. The span at 717 to 726 (TDTSNPMGHL) shows a compositional bias: polar residues.

As to quaternary structure, efficient DNA binding requires dimerization with another bHLH protein.

Its subcellular location is the nucleus. Functionally, transcriptional regulator. Involved in the initiation of neuronal differentiation. Activates transcription by binding to the E box (5'-CANNTG-3'). May be involved in the functional network that regulates the development of the GnRH axis. This chain is Transcription factor 12 (tcf12), found in Danio rerio (Zebrafish).